A 142-amino-acid polypeptide reads, in one-letter code: MKTFSAKAHEVTREWYVIDATDKVLGRVASEVARRLRGKHKPEFTPHVDTGDFIIVINASKLKVTGNKTLDKKYYRHSGYPGGIYETTFGKMQERFPGRALEKAVKGMLPKCPLGYAMIKKLKVYAEATHPHSAQQPKALEI.

Belongs to the universal ribosomal protein uL13 family. In terms of assembly, part of the 50S ribosomal subunit.

In terms of biological role, this protein is one of the early assembly proteins of the 50S ribosomal subunit, although it is not seen to bind rRNA by itself. It is important during the early stages of 50S assembly. The sequence is that of Large ribosomal subunit protein uL13 from Burkholderia mallei (strain NCTC 10247).